Reading from the N-terminus, the 59-residue chain is UPF0509 protein KPN78578_12530 (59 aa).

The protein belongs to the UPF0509 family.

The sequence is that of UPF0509 protein KPN78578_12530 from Klebsiella pneumoniae subsp. pneumoniae (strain ATCC 700721 / MGH 78578).